The sequence spans 92 residues: Arrestin-C (92 aa).

It belongs to the arrestin family. As to quaternary structure, homodimer; disulfide-linked in response to retinal illumination. Interacts with CXCR4; the interaction is dependent on the C-terminal phosphorylation of CXCR4 and modulates the calcium ion mobilization activity of CXCR4. Interacts with GPR84. In terms of tissue distribution, retina and pineal gland.

The protein localises to the photoreceptor inner segment. Its subcellular location is the cell projection. It is found in the cilium. The protein resides in the photoreceptor outer segment. Functionally, may play a role in an as yet undefined retina-specific signal transduction. Could bind to photoactivated-phosphorylated red/green opsins. The polypeptide is Arrestin-C (Arr3) (Rattus norvegicus (Rat)).